We begin with the raw amino-acid sequence, 540 residues long: (13S,14R)-13-O-acetyl-1-hydroxy-N-methylcanadine 8-hydroxylase CYP82X1 (540 aa).

A helical transmembrane segment spans residues 15 to 35 (FSIILVTTVSIVLLYSVFFWV). Heme is bound at residue Cys-483.

This sequence belongs to the cytochrome P450 family. Heme is required as a cofactor. In terms of tissue distribution, highly expressed in capsules. Expressed is stems.

It is found in the membrane. It catalyses the reaction (13S,14R)-13-O-acetyl-1-hydroxy-N-methylcanadine + reduced [NADPH--hemoprotein reductase] + O2 = (13S,14R)-13-O-acetyl-1,8-dihydroxy-N-methylcanadine + oxidized [NADPH--hemoprotein reductase] + H2O + H(+). It functions in the pathway alkaloid biosynthesis. Its function is as follows. Cytochrome P450 involved in the biosynthesis of the benzylisoquinoline alkaloid noscapine. Converts (13S,14R)-13-O-acetyl-1-hydroxy-N-methylcanadine to (13S,14R)-13-O-acetyl-1,8-dihydroxy-N-methylcanadine. This chain is (13S,14R)-13-O-acetyl-1-hydroxy-N-methylcanadine 8-hydroxylase CYP82X1, found in Papaver somniferum (Opium poppy).